The sequence spans 67 residues: Large ribosomal subunit protein uL29 (67 aa).

Belongs to the universal ribosomal protein uL29 family.

This chain is Large ribosomal subunit protein uL29, found in Sphingopyxis alaskensis (strain DSM 13593 / LMG 18877 / RB2256) (Sphingomonas alaskensis).